Here is a 359-residue protein sequence, read N- to C-terminus: MTEPVTVDVRTDPPYPVIIGRGLLGDLGRVLDGRHKVAILHQPTLTQTAEAIRTHLSEKGIDAHRIEIPDAEGGKELPVVGFIWQVLGRIGVGRKDAIVSLGGGAATDVAGFAAATWLRGIDIVHVPTTLLGMVDAAVGGKTGINTDAGKNLVGAFHQPAAVLIDLATLESLPRNEIVAGMAEIVKAGFIADPVILDMIEADPEAALDPSGAVLPELIRRAVVVKAEVVAADEKESQLREILNYGHTLAHAIERRERYQWRHGAAVSVGLVFAAELGRLAGRLDDDTTERHRAILTSLGLPVTYDADALPQLMESMLGDKKTRAGVLRFVVLDGLAKPGRLEGPDPSLLAAAYAEVARD.

Residues 70 to 75, 104 to 108, 128 to 129, Lys-141, and Lys-150 contribute to the NAD(+) site; these read DAEGGK, GAATD, and TT. Positions 183, 246, and 262 each coordinate Zn(2+).

It belongs to the sugar phosphate cyclases superfamily. Dehydroquinate synthase family. Requires Co(2+) as cofactor. Zn(2+) serves as cofactor. It depends on NAD(+) as a cofactor.

The protein resides in the cytoplasm. The catalysed reaction is 7-phospho-2-dehydro-3-deoxy-D-arabino-heptonate = 3-dehydroquinate + phosphate. It functions in the pathway metabolic intermediate biosynthesis; chorismate biosynthesis; chorismate from D-erythrose 4-phosphate and phosphoenolpyruvate: step 2/7. Catalyzes the conversion of 3-deoxy-D-arabino-heptulosonate 7-phosphate (DAHP) to dehydroquinate (DHQ). The chain is 3-dehydroquinate synthase from Mycolicibacterium gilvum (strain PYR-GCK) (Mycobacterium gilvum (strain PYR-GCK)).